The chain runs to 251 residues: Adenosylcobinamide-GDP ribazoletransferase (251 aa).

A run of 7 helical transmembrane segments spans residues 36 to 56 (LYPF…FVLS), 60 to 80 (VPIM…TGFL), 110 to 130 (VGAF…AGMF), 141 to 161 (VLIF…VSQE), 181 to 201 (EIIL…TLGI), 202 to 222 (NYLI…LKVK), and 231 to 251 (DVAG…LGII).

This sequence belongs to the CobS family. Mg(2+) serves as cofactor.

It localises to the cell membrane. It catalyses the reaction alpha-ribazole + adenosylcob(III)inamide-GDP = adenosylcob(III)alamin + GMP + H(+). It carries out the reaction alpha-ribazole 5'-phosphate + adenosylcob(III)inamide-GDP = adenosylcob(III)alamin 5'-phosphate + GMP + H(+). It functions in the pathway cofactor biosynthesis; adenosylcobalamin biosynthesis; adenosylcobalamin from cob(II)yrinate a,c-diamide: step 7/7. Its function is as follows. Joins adenosylcobinamide-GDP and alpha-ribazole to generate adenosylcobalamin (Ado-cobalamin). Also synthesizes adenosylcobalamin 5'-phosphate from adenosylcobinamide-GDP and alpha-ribazole 5'-phosphate. The chain is Adenosylcobinamide-GDP ribazoletransferase from Clostridium perfringens (strain 13 / Type A).